We begin with the raw amino-acid sequence, 498 residues long: tRNA-guanine(15) transglycosylase (498 aa).

Residue aspartate 85 is the Nucleophile of the active site. Residue aspartate 120 coordinates substrate. Residues cysteine 275, cysteine 277, and cysteine 280 each coordinate Zn(2+).

Belongs to the archaeosine tRNA-ribosyltransferase family. Zn(2+) is required as a cofactor.

The enzyme catalyses guanosine(15) in tRNA + 7-cyano-7-deazaguanine = 7-cyano-7-carbaguanosine(15) in tRNA + guanine. It functions in the pathway tRNA modification; archaeosine-tRNA biosynthesis. In terms of biological role, exchanges the guanine residue with 7-cyano-7-deazaguanine (preQ0) at position 15 in the dihydrouridine loop (D-loop) of archaeal tRNAs. The sequence is that of tRNA-guanine(15) transglycosylase from Sulfolobus acidocaldarius (strain ATCC 33909 / DSM 639 / JCM 8929 / NBRC 15157 / NCIMB 11770).